The sequence spans 890 residues: Alanine--tRNA ligase (890 aa).

H568, H572, C680, and H684 together coordinate Zn(2+).

This sequence belongs to the class-II aminoacyl-tRNA synthetase family. The cofactor is Zn(2+).

It localises to the cytoplasm. It carries out the reaction tRNA(Ala) + L-alanine + ATP = L-alanyl-tRNA(Ala) + AMP + diphosphate. Its function is as follows. Catalyzes the attachment of alanine to tRNA(Ala) in a two-step reaction: alanine is first activated by ATP to form Ala-AMP and then transferred to the acceptor end of tRNA(Ala). Also edits incorrectly charged Ser-tRNA(Ala) and Gly-tRNA(Ala) via its editing domain. This chain is Alanine--tRNA ligase, found in Psychrobacter cryohalolentis (strain ATCC BAA-1226 / DSM 17306 / VKM B-2378 / K5).